The primary structure comprises 236 residues: UPF0173 metal-dependent hydrolase DSY1309 (236 aa).

It belongs to the UPF0173 family.

The protein is UPF0173 metal-dependent hydrolase DSY1309 of Desulfitobacterium hafniense (strain Y51).